The chain runs to 260 residues: DNA repair protein RecO (260 aa).

Residues 239–260 form a disordered region; the sequence is SAGVAAARKAGGDGSDGDEGEQ.

The protein belongs to the RecO family.

In terms of biological role, involved in DNA repair and RecF pathway recombination. This chain is DNA repair protein RecO, found in Sodalis glossinidius (strain morsitans).